Here is a 1429-residue protein sequence, read N- to C-terminus: Autophagy-related protein 11 (1429 aa).

Coiled coils occupy residues 540–579, 616–808, 842–985, and 1106–1135; these read GDDD…QSQA, EGID…LDDH, TLVE…HMNS, and RRIK…LQKD. Residues 574 to 622 form a disordered region; the sequence is HRQSQASRPGNLFQPQGSQQRERVNSASSVRSSRFDDRRRSSEGIDPLM. Positions 575–592 are enriched in polar residues; that stretch reads RQSQASRPGNLFQPQGSQ. Residues 606-616 show a composition bias toward basic and acidic residues; sequence SRFDDRRRSSE. Disordered stretches follow at residues 1205–1224 and 1333–1405; these read SKSL…ENDN and RAHN…PTRR. 2 stretches are compositionally biased toward polar residues: residues 1206-1215 and 1333-1362; these read KSLQPSSETE and RAHN…GQKN. Residues 1384 to 1398 are compositionally biased toward basic and acidic residues; it reads KADEQPRSVVQREDS.

It belongs to the ATG11 family. Homodimer and potential homooligomers. Interacts with ATG1 kinase and the ATG19 and ATG34 cargo protein transporters. Interacts with ATG9, ATG17 and ATG20.

Its subcellular location is the preautophagosomal structure membrane. The protein resides in the vacuole membrane. Functionally, involved in cytoplasm to vacuole transport (Cvt), pexophagy, mitophagy and nucleophagy. Recruits mitochondria for their selective degradation via autophagy (mitophagy) during starvation, through its interaction with ATG32. Works as scaffold proteins that recruit ATG proteins to the pre-autophagosome (PAS), the site of vesicle/autophagosome formation. Required for ATG9 anterograde transport from the mitochondria to the PAS. Also recruits the ATG19-prAPE1 complex to the PAS. Required for the Cvt vesicles completion. Autophagy is required for proper vegetative growth, asexual/sexual reproduction, and full virulence. Autophagy is particularly involved in the biosynthesis of deoxynivalenol (DON), an important virulence determinant. This chain is Autophagy-related protein 11, found in Gibberella zeae (strain ATCC MYA-4620 / CBS 123657 / FGSC 9075 / NRRL 31084 / PH-1) (Wheat head blight fungus).